Here is a 362-residue protein sequence, read N- to C-terminus: Class I histocompatibility antigen, Gogo-B*0102 alpha chain (362 aa).

An N-terminal signal peptide occupies residues 1-24 (MRVTAPRTLLLLLSAALALTETWA). An alpha-1 region spans residues 25–114 (GSHSMRYFDT…ALRYYNQSEA (90 aa)). Over 25–308 (GSHSMRYFDT…EPSSQSTIPI (284 aa)) the chain is Extracellular. The N-linked (GlcNAc...) asparagine glycan is linked to Asn110. Positions 115-206 (GSHTFQRMFG…ENGRETLQRA (92 aa)) are alpha-2. Intrachain disulfides connect Cys125–Cys188 and Cys227–Cys283. Residues 207–298 (DTPKTHVTHH…GLPKPLTLRW (92 aa)) are alpha-3. Residues 209 to 295 (PKTHVTHHPI…QHEGLPKPLT (87 aa)) form the Ig-like C1-type domain. The tract at residues 299–308 (EPSSQSTIPI) is connecting peptide. Residues 309-332 (VGIVAGLAVLAVVVIGAVVTAVIC) traverse the membrane as a helical segment. The Cytoplasmic portion of the chain corresponds to 333–362 (RRKSSGGKGGSYSQAASSDSAQGSDVSLTA). The disordered stretch occupies residues 335-362 (KSSGGKGGSYSQAASSDSAQGSDVSLTA). A compositionally biased stretch (low complexity) spans 343–362 (SYSQAASSDSAQGSDVSLTA).

It belongs to the MHC class I family. As to quaternary structure, heterodimer of an alpha chain and a beta chain (beta-2-microglobulin).

Its subcellular location is the membrane. Its function is as follows. Involved in the presentation of foreign antigens to the immune system. The protein is Class I histocompatibility antigen, Gogo-B*0102 alpha chain of Gorilla gorilla gorilla (Western lowland gorilla).